We begin with the raw amino-acid sequence, 64 residues long: Large ribosomal subunit protein uL30 (64 aa).

This sequence belongs to the universal ribosomal protein uL30 family. Part of the 50S ribosomal subunit.

The polypeptide is Large ribosomal subunit protein uL30 (Bdellovibrio bacteriovorus (strain ATCC 15356 / DSM 50701 / NCIMB 9529 / HD100)).